The following is a 427-amino-acid chain: Phosphoribosylamine--glycine ligase (427 aa).

The region spanning 110–315 (KDFCQRHGLP…IVPILLAAAK (206 aa)) is the ATP-grasp domain. 136–196 (LDTLEAPFVI…EEFMHGEEAS (61 aa)) provides a ligand contact to ATP. Residues Glu285 and Asn287 each contribute to the Mg(2+) site.

It belongs to the GARS family. The cofactor is Mg(2+). Requires Mn(2+) as cofactor.

The enzyme catalyses 5-phospho-beta-D-ribosylamine + glycine + ATP = N(1)-(5-phospho-beta-D-ribosyl)glycinamide + ADP + phosphate + H(+). Its pathway is purine metabolism; IMP biosynthesis via de novo pathway; N(1)-(5-phospho-D-ribosyl)glycinamide from 5-phospho-alpha-D-ribose 1-diphosphate: step 2/2. In Caulobacter vibrioides (strain ATCC 19089 / CIP 103742 / CB 15) (Caulobacter crescentus), this protein is Phosphoribosylamine--glycine ligase.